The primary structure comprises 108 residues: UPF0060 membrane protein SH0717 (108 aa).

The next 4 helical transmembrane spans lie at I5–W25, S31–F51, V60–D80, and K86–S106.

Belongs to the UPF0060 family.

Its subcellular location is the cell membrane. The chain is UPF0060 membrane protein SH0717 from Staphylococcus haemolyticus (strain JCSC1435).